The sequence spans 298 residues: Flavin-dependent thymidylate synthase (298 aa).

One can recognise a ThyX domain in the interval 41–251 (GFVRLVDYMG…PLTYAAFVEY (211 aa)). FAD-binding positions include T87, 110-112 (RHR), and E118. DUMP-binding positions include 107 to 110 (QWVR), 118 to 122 (EYSAR), and R190. The ThyX motif motif lies at 110–120 (RHRTANVNEYS). FAD-binding positions include 206–208 (DLH) and H212. DUMP is bound at residue R217. The active-site Involved in ionization of N3 of dUMP, leading to its activation is the R217.

The protein belongs to the thymidylate synthase ThyX family. As to quaternary structure, homotetramer. FAD serves as cofactor.

It carries out the reaction dUMP + (6R)-5,10-methylene-5,6,7,8-tetrahydrofolate + NADPH + H(+) = dTMP + (6S)-5,6,7,8-tetrahydrofolate + NADP(+). It participates in pyrimidine metabolism; dTTP biosynthesis. Functionally, catalyzes the reductive methylation of 2'-deoxyuridine-5'-monophosphate (dUMP) to 2'-deoxythymidine-5'-monophosphate (dTMP) while utilizing 5,10-methylenetetrahydrofolate (mTHF) as the methyl donor, and NADPH and FADH(2) as the reductant. In Ehrlichia ruminantium (strain Welgevonden), this protein is Flavin-dependent thymidylate synthase.